Consider the following 735-residue polypeptide: Photosystem I P700 chlorophyll a apoprotein A2 (735 aa).

8 helical membrane-spanning segments follow: residues 46–69, 135–158, 175–199, 273–291, 333–356, 372–398, 420–442, and 518–536; these read LFST…FHIA, LYQG…LHLQ, LNHH…HVAI, IAHH…GHMY, LHFQ…QHMY, AALY…IFFI, AIIS…LYVH, and FLVH…LILV. [4Fe-4S] cluster contacts are provided by Cys-560 and Cys-569. A run of 2 helical transmembrane segments spans residues 576 to 597 and 644 to 666; these read AFYL…YWHW and LAVW…MFLI. Chlorophyll a-binding residues include His-655, Met-663, and Tyr-671. Trp-672 is a binding site for phylloquinone. The helical transmembrane segment at 708-728 threads the bilayer; the sequence is VVGLAHFSVGYVLTYAAFLIA.

It belongs to the PsaA/PsaB family. The PsaA/B heterodimer binds the P700 chlorophyll special pair and subsequent electron acceptors. PSI consists of a core antenna complex that captures photons, and an electron transfer chain that converts photonic excitation into a charge separation. The cyanobacterial PSI reaction center is composed of one copy each of PsaA,B,C,D,E,F,I,J,K,L,M and X, and forms trimeric complexes. PSI electron transfer chain: 5 chlorophyll a, 1 chlorophyll a', 2 phylloquinones and 3 4Fe-4S clusters. PSI core antenna: 90 chlorophyll a, 22 carotenoids, 3 phospholipids and 1 galactolipid. P700 is a chlorophyll a/chlorophyll a' dimer, A0 is one or more chlorophyll a, A1 is one or both phylloquinones and FX is a shared 4Fe-4S iron-sulfur center. serves as cofactor.

It is found in the cellular thylakoid membrane. It catalyses the reaction reduced [plastocyanin] + hnu + oxidized [2Fe-2S]-[ferredoxin] = oxidized [plastocyanin] + reduced [2Fe-2S]-[ferredoxin]. Its function is as follows. PsaA and PsaB bind P700, the primary electron donor of photosystem I (PSI), as well as the electron acceptors A0, A1 and FX. PSI is a plastocyanin/cytochrome c6-ferredoxin oxidoreductase, converting photonic excitation into a charge separation, which transfers an electron from the donor P700 chlorophyll pair to the spectroscopically characterized acceptors A0, A1, FX, FA and FB in turn. Oxidized P700 is reduced on the lumenal side of the thylakoid membrane by plastocyanin or cytochrome c6. The protein is Photosystem I P700 chlorophyll a apoprotein A2 of Synechococcus sp. (strain CC9902).